The sequence spans 184 residues: Large ribosomal subunit protein uL6 (184 aa).

It belongs to the universal ribosomal protein uL6 family. Part of the 50S ribosomal subunit.

Its function is as follows. This protein binds to the 23S rRNA, and is important in its secondary structure. It is located near the subunit interface in the base of the L7/L12 stalk, and near the tRNA binding site of the peptidyltransferase center. This Thermotoga petrophila (strain ATCC BAA-488 / DSM 13995 / JCM 10881 / RKU-1) protein is Large ribosomal subunit protein uL6.